The primary structure comprises 717 residues: Polyribonucleotide nucleotidyltransferase (717 aa).

The Mg(2+) site is built by Asp496 and Asp502. Residues 563 to 622 (PRLLTIKIDPDLIGLVIGPGGKTVKGITEQTGTKIDIDDDGTVTISSTDGEQAEKAKRLI) enclose the KH domain. Positions 632-700 (GEVYLGRVTR…SKGRLNLTRL (69 aa)) constitute an S1 motif domain.

The protein belongs to the polyribonucleotide nucleotidyltransferase family. Requires Mg(2+) as cofactor.

The protein resides in the cytoplasm. It carries out the reaction RNA(n+1) + phosphate = RNA(n) + a ribonucleoside 5'-diphosphate. Functionally, involved in mRNA degradation. Catalyzes the phosphorolysis of single-stranded polyribonucleotides processively in the 3'- to 5'-direction. The protein is Polyribonucleotide nucleotidyltransferase of Microcystis aeruginosa (strain NIES-843 / IAM M-2473).